Here is a 308-residue protein sequence, read N- to C-terminus: GMP synthase [glutamine-hydrolyzing] subunit B (308 aa).

A GMPS ATP-PPase domain is found at 1 to 185; that stretch reads MDWGRFVEEK…LGLPEKIYNR (185 aa). ATP is bound at residue 28–34; sequence SGGVDSS.

In terms of assembly, heterodimer composed of a glutamine amidotransferase subunit (A) and a GMP-binding subunit (B).

The enzyme catalyses XMP + L-glutamine + ATP + H2O = GMP + L-glutamate + AMP + diphosphate + 2 H(+). Its pathway is purine metabolism; GMP biosynthesis; GMP from XMP (L-Gln route): step 1/1. Functionally, catalyzes the synthesis of GMP from XMP. The polypeptide is GMP synthase [glutamine-hydrolyzing] subunit B (guaAB) (Pyrococcus horikoshii (strain ATCC 700860 / DSM 12428 / JCM 9974 / NBRC 100139 / OT-3)).